Here is a 403-residue protein sequence, read N- to C-terminus: Probable tubulin--tyrosine ligase C12B10.04 (403 aa).

Residues 9–386 enclose the TTL domain; sequence KVYVNYRDEY…PFFESSTKRN (378 aa).

The protein belongs to the tubulin--tyrosine ligase family. Requires Mg(2+) as cofactor. The cofactor is K(+).

It localises to the cytoplasm. The protein localises to the nucleus. It catalyses the reaction C-terminal L-alpha-aminoacyl-L-glutamyl-L-glutamyl-[tubulin] + L-tyrosine + ATP = C-terminal L-alpha-aminoacyl-L-glutamyl-L-glutamyl-L-tyrosyl-[tubulin] + ADP + phosphate + H(+). Probable tubulin--tyrosine ligase. In Schizosaccharomyces pombe (strain 972 / ATCC 24843) (Fission yeast), this protein is Probable tubulin--tyrosine ligase C12B10.04.